Reading from the N-terminus, the 320-residue chain is Ferrochelatase (320 aa).

Fe cation is bound by residues His-194 and Glu-275.

It belongs to the ferrochelatase family. As to quaternary structure, monomer.

The protein resides in the cytoplasm. It carries out the reaction heme b + 2 H(+) = protoporphyrin IX + Fe(2+). The protein operates within porphyrin-containing compound metabolism; protoheme biosynthesis; protoheme from protoporphyrin-IX: step 1/1. Functionally, catalyzes the ferrous insertion into protoporphyrin IX. This chain is Ferrochelatase, found in Salmonella arizonae (strain ATCC BAA-731 / CDC346-86 / RSK2980).